A 348-amino-acid polypeptide reads, in one-letter code: Selenide, water dikinase (348 aa).

The active site involves cysteine 17. Residues lysine 20 and 48-50 (TRD) each bind ATP. Aspartate 51 lines the Mg(2+) pocket. ATP is bound by residues aspartate 68, aspartate 91, and 139 to 141 (GHS). Aspartate 91 lines the Mg(2+) pocket. Aspartate 227 is a Mg(2+) binding site.

The protein belongs to the selenophosphate synthase 1 family. Class I subfamily. In terms of assembly, homodimer. It depends on Mg(2+) as a cofactor.

The enzyme catalyses hydrogenselenide + ATP + H2O = selenophosphate + AMP + phosphate + 2 H(+). Synthesizes selenophosphate from selenide and ATP. This is Selenide, water dikinase from Yersinia pseudotuberculosis serotype I (strain IP32953).